Reading from the N-terminus, the 338-residue chain is UDP-glucose 4-epimerase (338 aa).

Residues 11–12 (YI), 31–36 (DNLCNS), 58–59 (DI), 80–84 (FAGLK), Asn99, Ser124, Tyr149, Lys153, and Phe178 each bind NAD(+). 2 residues coordinate substrate: Ser124 and Tyr149. The active-site Proton acceptor is the Tyr149. Substrate contacts are provided by residues Asn179, 199 to 200 (NL), 216 to 218 (SVF), Arg231, and 292 to 295 (RPGD).

The protein belongs to the NAD(P)-dependent epimerase/dehydratase family. In terms of assembly, homodimer. The cofactor is NAD(+).

The enzyme catalyses UDP-alpha-D-glucose = UDP-alpha-D-galactose. The protein operates within carbohydrate metabolism; galactose metabolism. Involved in the metabolism of galactose. Catalyzes the conversion of UDP-galactose (UDP-Gal) to UDP-glucose (UDP-Glc) through a mechanism involving the transient reduction of NAD. The sequence is that of UDP-glucose 4-epimerase (galE) from Pasteurella multocida (strain Pm70).